We begin with the raw amino-acid sequence, 377 residues long: DNA methyltransferase CcrM (377 aa).

One can recognise an RAMA domain in the interval 271-373 (LGKAELTVMT…LRKIIREQMA (103 aa)).

This sequence belongs to the N(4)/N(6)-methyltransferase family.

The catalysed reaction is a 2'-deoxyadenosine in DNA + S-adenosyl-L-methionine = an N(6)-methyl-2'-deoxyadenosine in DNA + S-adenosyl-L-homocysteine + H(+). Its function is as follows. A beta subtype methylase that recognizes the double-stranded sequence 5'-GANTC-3' and methylates A-2 on both strands. CcrM-mediated methylation has important cellular functions. Contributes to the accurate cell-cycle control of DNA replication and cellular morphology. This chain is DNA methyltransferase CcrM (ccrM), found in Brucella canis (strain ATCC 23365 / NCTC 10854 / RM-666).